Reading from the N-terminus, the 180-residue chain is NADH-quinone oxidoreductase subunit I (180 aa).

4Fe-4S ferredoxin-type domains lie at 48–80 and 90–119; these read IVLT…LQKA and EFFR…LTPD. Residues Cys60, Cys63, Cys66, Cys70, Cys99, Cys102, Cys105, and Cys109 each coordinate [4Fe-4S] cluster.

The protein belongs to the complex I 23 kDa subunit family. As to quaternary structure, NDH-1 is composed of 13 different subunits. Subunits NuoA, H, J, K, L, M, N constitute the membrane sector of the complex. Requires [4Fe-4S] cluster as cofactor.

The protein resides in the cell inner membrane. The enzyme catalyses a quinone + NADH + 5 H(+)(in) = a quinol + NAD(+) + 4 H(+)(out). Its function is as follows. NDH-1 shuttles electrons from NADH, via FMN and iron-sulfur (Fe-S) centers, to quinones in the respiratory chain. The immediate electron acceptor for the enzyme in this species is believed to be ubiquinone. Couples the redox reaction to proton translocation (for every two electrons transferred, four hydrogen ions are translocated across the cytoplasmic membrane), and thus conserves the redox energy in a proton gradient. This Sodalis glossinidius (strain morsitans) protein is NADH-quinone oxidoreductase subunit I.